Here is a 316-residue protein sequence, read N- to C-terminus: Glutamyl-Q tRNA(Asp) synthetase (316 aa).

L-glutamate contacts are provided by residues 13–17 (RFAPS) and Asp-49. The 'HIGH' region signature appears at 16–26 (PSPSGDLHFGS). Positions 105, 107, 119, and 123 each coordinate Zn(2+). L-glutamate-binding residues include Tyr-176 and Arg-194. Residues 232–236 (KLSKQ) carry the 'KMSKS' region motif. Lys-235 contributes to the ATP binding site.

Belongs to the class-I aminoacyl-tRNA synthetase family. GluQ subfamily. Zn(2+) is required as a cofactor.

Its function is as follows. Catalyzes the tRNA-independent activation of glutamate in presence of ATP and the subsequent transfer of glutamate onto a tRNA(Asp). Glutamate is transferred on the 2-amino-5-(4,5-dihydroxy-2-cyclopenten-1-yl) moiety of the queuosine in the wobble position of the QUC anticodon. The protein is Glutamyl-Q tRNA(Asp) synthetase of Photorhabdus laumondii subsp. laumondii (strain DSM 15139 / CIP 105565 / TT01) (Photorhabdus luminescens subsp. laumondii).